A 291-amino-acid polypeptide reads, in one-letter code: Hydroxysteroid 11-beta-dehydrogenase 1-like protein A (291 aa).

The signal sequence occupies residues 1 to 18; that stretch reads MAGVKLLLLSLCVGYTAY. Residues 40–66, 91–92, and 118–120 each bind NADP(+); these read GSSTGIGEQIAYEFARMGAHIMVTARR, DM, and NHI. S170 is a binding site for substrate. The Proton acceptor role is filled by Y183. Residues 183–187 and 216–222 each bind NADP(+); these read YCASK and GYIDTEN.

The protein belongs to the short-chain dehydrogenases/reductases (SDR) family.

It localises to the secreted. The enzyme catalyses cortisone + NADPH + H(+) = cortisol + NADP(+). Unidirectional NADP(+)-dependent cortisol dehydrogenase (in vitro). This chain is Hydroxysteroid 11-beta-dehydrogenase 1-like protein A (hsd11b1l-a), found in Xenopus laevis (African clawed frog).